A 241-amino-acid chain; its full sequence is NAD(P)H-hydrate epimerase (241 aa).

Positions 11 to 221 (AASLDKDLME…SIVEKYGLNC (211 aa)) constitute a YjeF N-terminal domain. Position 65–69 (65–69 (NNGGD)) interacts with (6S)-NADPHX. K(+) is bound by residues Asn66 and Asp127. (6S)-NADPHX is bound by residues 131 to 137 (GFSFGGP) and Asp160. Ser163 serves as a coordination point for K(+).

Belongs to the NnrE/AIBP family. K(+) is required as a cofactor.

It localises to the cytoplasm. Its subcellular location is the mitochondrion. The enzyme catalyses (6R)-NADHX = (6S)-NADHX. It carries out the reaction (6R)-NADPHX = (6S)-NADPHX. Its function is as follows. Catalyzes the epimerization of the S- and R-forms of NAD(P)HX, a damaged form of NAD(P)H that is a result of enzymatic or heat-dependent hydration. This is a prerequisite for the S-specific NAD(P)H-hydrate dehydratase to allow the repair of both epimers of NAD(P)HX. The chain is NAD(P)H-hydrate epimerase from Aspergillus fumigatus (strain ATCC MYA-4609 / CBS 101355 / FGSC A1100 / Af293) (Neosartorya fumigata).